The following is a 508-amino-acid chain: Asparagine--tRNA ligase (508 aa).

Belongs to the class-II aminoacyl-tRNA synthetase family. As to quaternary structure, homodimer.

The protein localises to the cytoplasm. The catalysed reaction is tRNA(Asn) + L-asparagine + ATP = L-asparaginyl-tRNA(Asn) + AMP + diphosphate + H(+). The chain is Asparagine--tRNA ligase from Streptococcus suis (strain 05ZYH33).